Consider the following 266-residue polypeptide: Ciliary microtubule inner protein 4 (266 aa).

2 stretches are compositionally biased toward polar residues: residues 1 to 15 and 24 to 38; these read MELS…LTRT and QDMN…SLDN. The interval 1–124 is disordered; it reads MELSHRQGTT…SPEQRTVPLS (124 aa). Over residues 47–63 the composition is skewed to low complexity; the sequence is LSQSPLGSSLGQGYLET. Over residues 81-102 the composition is skewed to basic and acidic residues; the sequence is HPEDLKKGASRSSSRDARETFR.

In terms of tissue distribution, only detected in testis, in the spermatids and sperm within the seminiferous tubules (at protein level).

It localises to the cytoplasmic vesicle. The protein localises to the secretory vesicle. Its subcellular location is the acrosome. The protein resides in the cell projection. It is found in the cilium. It localises to the flagellum. Its function is as follows. Seems to be associated with spermiogenesis but is not essential for sperm development and male fertility. The sequence is that of Ciliary microtubule inner protein 4 (Cimip4) from Mus musculus (Mouse).